Here is a 215-residue protein sequence, read N- to C-terminus: Probable phosphoglycerate mutase GpmB (215 aa).

Substrate contacts are provided by residues 8–15 (RHGETQWN), 21–22 (QG), Arg-58, Lys-60, 82–85 (ELDM), 104–105 (RR), and 151–152 (GI). His-9 functions as the Tele-phosphohistidine intermediate in the catalytic mechanism. Glu-82 (proton donor/acceptor) is an active-site residue.

This sequence belongs to the phosphoglycerate mutase family. GpmB subfamily.

It catalyses the reaction (2R)-2-phosphoglycerate = (2R)-3-phosphoglycerate. Its pathway is carbohydrate degradation; glycolysis; pyruvate from D-glyceraldehyde 3-phosphate: step 3/5. The sequence is that of Probable phosphoglycerate mutase GpmB from Salmonella arizonae (strain ATCC BAA-731 / CDC346-86 / RSK2980).